Consider the following 350-residue polypeptide: tRNA uridine(34) hydroxylase (350 aa).

Positions 146–240 constitute a Rhodanese domain; that stretch reads DDPDAVFIDM…YARRAREQGL (95 aa). Cysteine 200 serves as the catalytic Cysteine persulfide intermediate. Residues 319–328 show a composition bias toward basic and acidic residues; sequence RRRRAGRENG. Residues 319–350 form a disordered region; that stretch reads RRRRAGRENGNKIFNKSRGRLNSKLSIPDPAE.

The protein belongs to the TrhO family.

It carries out the reaction uridine(34) in tRNA + AH2 + O2 = 5-hydroxyuridine(34) in tRNA + A + H2O. Functionally, catalyzes oxygen-dependent 5-hydroxyuridine (ho5U) modification at position 34 in tRNAs. The sequence is that of tRNA uridine(34) hydroxylase from Salmonella dublin (strain CT_02021853).